The chain runs to 221 residues: Zingipain-2 (221 aa).

Disulfide bonds link Cys-24–Cys-65 and Cys-58–Cys-98. Cys-27 is an active-site residue. N-linked (GlcNAc...) asparagine glycosylation is found at Asn-99 and Asn-156. Cysteines 155 and 206 form a disulfide. His-161 is a catalytic residue.

This sequence belongs to the peptidase C1 family.

It catalyses the reaction Preferential cleavage of peptides with a proline residue at the P2 position.. Its function is as follows. Cysteine proteinase with a specific activity toward peptides with a proline residue at the P2 position. In Zingiber officinale (Ginger), this protein is Zingipain-2.